Consider the following 349-residue polypeptide: tRNA pseudouridine synthase D (349 aa).

F27 lines the substrate pocket. Catalysis depends on D80, which acts as the Nucleophile. N129 contacts substrate. Positions 155 to 303 constitute a TRUD domain; that stretch reads GVPNYFGAQR…VEAARRAMLL (149 aa). F329 contributes to the substrate binding site.

The protein belongs to the pseudouridine synthase TruD family.

It catalyses the reaction uridine(13) in tRNA = pseudouridine(13) in tRNA. Its function is as follows. Responsible for synthesis of pseudouridine from uracil-13 in transfer RNAs. The protein is tRNA pseudouridine synthase D of Enterobacter sp. (strain 638).